The chain runs to 123 residues: Unclassified hydrophobin 9 (123 aa).

The N-terminal stretch at 1–24 (MFFFNTKPIVFLVVLSVVATFAAA) is a signal peptide. Disulfide bonds link C37–C103, C45–C97, C46–C88, and C104–C117.

This sequence belongs to the fungal hydrophobin family. As to quaternary structure, self-assembles to form functional amyloid fibrils called rodlets. Self-assembly into fibrillar rodlets occurs spontaneously at hydrophobic:hydrophilic interfaces and the rodlets further associate laterally to form amphipathic monolayers.

The protein localises to the secreted. Its subcellular location is the cell wall. In terms of biological role, aerial growth, conidiation, and dispersal of filamentous fungi in the environment rely upon a capability of their secreting small amphipathic proteins called hydrophobins (HPBs) with low sequence identity. Class I can self-assemble into an outermost layer of rodlet bundles on aerial cell surfaces, conferring cellular hydrophobicity that supports fungal growth, development and dispersal; whereas Class II form highly ordered films at water-air interfaces through intermolecular interactions but contribute nothing to the rodlet structure. This is Unclassified hydrophobin 9 from Pleurotus ostreatus (strain PC15) (Oyster mushroom).